The primary structure comprises 324 residues: Phospho-N-acetylmuramoyl-pentapeptide-transferase (324 aa).

The next 10 helical transmembrane spans lie at 5–25, 52–72, 77–97, 117–137, 147–167, 176–196, 202–222, 227–247, 253–273, and 302–322; these read GLLV…PLFI, PTMG…IMAI, LGAE…IGFL, LLGQ…QGFD, ITFD…IGGS, LDGL…IIAV, AVAI…VFNA, VFMG…VAIL, LLVI…IQVI, and VVVT…YIGV.

It belongs to the glycosyltransferase 4 family. MraY subfamily. Mg(2+) serves as cofactor.

It localises to the cell membrane. The enzyme catalyses UDP-N-acetyl-alpha-D-muramoyl-L-alanyl-gamma-D-glutamyl-meso-2,6-diaminopimeloyl-D-alanyl-D-alanine + di-trans,octa-cis-undecaprenyl phosphate = di-trans,octa-cis-undecaprenyl diphospho-N-acetyl-alpha-D-muramoyl-L-alanyl-D-glutamyl-meso-2,6-diaminopimeloyl-D-alanyl-D-alanine + UMP. The protein operates within cell wall biogenesis; peptidoglycan biosynthesis. Catalyzes the initial step of the lipid cycle reactions in the biosynthesis of the cell wall peptidoglycan: transfers peptidoglycan precursor phospho-MurNAc-pentapeptide from UDP-MurNAc-pentapeptide onto the lipid carrier undecaprenyl phosphate, yielding undecaprenyl-pyrophosphoryl-MurNAc-pentapeptide, known as lipid I. The polypeptide is Phospho-N-acetylmuramoyl-pentapeptide-transferase (Bacillus cytotoxicus (strain DSM 22905 / CIP 110041 / 391-98 / NVH 391-98)).